Here is a 240-residue protein sequence, read N- to C-terminus: Guanine nucleotide exchange factor sopE2 (240 aa).

Positions Leu-78 to Ser-240 are GEF catalytic domain.

The protein belongs to the GEF (guanine exchange factor) SopE family.

It localises to the secreted. In terms of biological role, activator for CDC42 by directly engaging this Rho GTPase and acting as potent guanine nucleotide exchange factor (GEF). This activation results in actin cytoskeleton rearrangements and stimulates membrane ruffling, promoting bacterial entry into non-phagocytic cells. Chaperone InvB is required for secretion, translocation and stabilization of intracellular levels of sopE2. The sequence is that of Guanine nucleotide exchange factor sopE2 (sopE2) from Salmonella paratyphi A (strain ATCC 9150 / SARB42).